A 261-amino-acid chain; its full sequence is Cytochrome c oxidase subunit 3 (261 aa).

Topologically, residues 1–15 (MAHQAHAYHMVDPSP) are mitochondrial matrix. The helical transmembrane segment at 16–34 (WPLTGAVAALLMTSGLAVW) threads the bilayer. The Mitochondrial intermembrane portion of the chain corresponds to 35–40 (FHFHSM). The helical transmembrane segment at 41–66 (YLLYLGLTLLLLTMVQWWRDIIREGT) threads the bilayer. Residues 67-72 (FQGHHT) lie on the Mitochondrial matrix side of the membrane. Residues 73 to 105 (PPVQKGLRYGMILFITSEVFFFLGFFWAFYHSS) form a helical membrane-spanning segment. The Mitochondrial intermembrane portion of the chain corresponds to 106–128 (LAPTPELGGCWPPTGIYPLDPFE). A helical membrane pass occupies residues 129 to 152 (VPLLNTAVLLASGVTVTWAHHSLM). The Mitochondrial matrix segment spans residues 153 to 155 (EGN). The chain crosses the membrane as a helical span at residues 156–183 (RKEAIQALTLTVLLGFYFTALQAMEYYE). Residues 184–190 (APFTIAD) lie on the Mitochondrial intermembrane side of the membrane. Residues 191–223 (GVYGSTFFVATGFHGLHVIIGSTFLMVCLLRQI) form a helical membrane-spanning segment. At 224–232 (QYHFTSEHH) the chain is on the mitochondrial matrix side. The helical transmembrane segment at 233-256 (FGFERAAWYWHFVDVVWLFLYVSI) threads the bilayer. Over 257 to 261 (YWWGS) the chain is Mitochondrial intermembrane.

The protein belongs to the cytochrome c oxidase subunit 3 family. As to quaternary structure, component of the cytochrome c oxidase (complex IV, CIV), a multisubunit enzyme composed of 14 subunits. The complex is composed of a catalytic core of 3 subunits MT-CO1, MT-CO2 and MT-CO3, encoded in the mitochondrial DNA, and 11 supernumerary subunits COX4I, COX5A, COX5B, COX6A, COX6B, COX6C, COX7A, COX7B, COX7C, COX8 and NDUFA4, which are encoded in the nuclear genome. The complex exists as a monomer or a dimer and forms supercomplexes (SCs) in the inner mitochondrial membrane with NADH-ubiquinone oxidoreductase (complex I, CI) and ubiquinol-cytochrome c oxidoreductase (cytochrome b-c1 complex, complex III, CIII), resulting in different assemblies (supercomplex SCI(1)III(2)IV(1) and megacomplex MCI(2)III(2)IV(2)).

It localises to the mitochondrion inner membrane. It catalyses the reaction 4 Fe(II)-[cytochrome c] + O2 + 8 H(+)(in) = 4 Fe(III)-[cytochrome c] + 2 H2O + 4 H(+)(out). Functionally, component of the cytochrome c oxidase, the last enzyme in the mitochondrial electron transport chain which drives oxidative phosphorylation. The respiratory chain contains 3 multisubunit complexes succinate dehydrogenase (complex II, CII), ubiquinol-cytochrome c oxidoreductase (cytochrome b-c1 complex, complex III, CIII) and cytochrome c oxidase (complex IV, CIV), that cooperate to transfer electrons derived from NADH and succinate to molecular oxygen, creating an electrochemical gradient over the inner membrane that drives transmembrane transport and the ATP synthase. Cytochrome c oxidase is the component of the respiratory chain that catalyzes the reduction of oxygen to water. Electrons originating from reduced cytochrome c in the intermembrane space (IMS) are transferred via the dinuclear copper A center (CU(A)) of subunit 2 and heme A of subunit 1 to the active site in subunit 1, a binuclear center (BNC) formed by heme A3 and copper B (CU(B)). The BNC reduces molecular oxygen to 2 water molecules using 4 electrons from cytochrome c in the IMS and 4 protons from the mitochondrial matrix. In Squalus acanthias (Spiny dogfish), this protein is Cytochrome c oxidase subunit 3 (MT-CO3).